A 271-amino-acid chain; its full sequence is Acetylglutamate kinase (271 aa).

Substrate is bound by residues 41–42 (GG), R63, and N166.

Belongs to the acetylglutamate kinase family. ArgB subfamily.

It localises to the cytoplasm. It carries out the reaction N-acetyl-L-glutamate + ATP = N-acetyl-L-glutamyl 5-phosphate + ADP. It functions in the pathway amino-acid biosynthesis; L-arginine biosynthesis; N(2)-acetyl-L-ornithine from L-glutamate: step 2/4. In terms of biological role, catalyzes the ATP-dependent phosphorylation of N-acetyl-L-glutamate. This Anaeromyxobacter sp. (strain Fw109-5) protein is Acetylglutamate kinase.